The primary structure comprises 382 residues: Leucine carboxyl methyltransferase 1 (382 aa).

Residues 1-11 are compositionally biased toward polar residues; sequence MSAPQIPNLNT. Residues 1-45 form a disordered region; that stretch reads MSAPQIPNLNTLRRGGGRGRFRARGGPDSSSSSGNKDRVVQGTDN. Residues Arg88, Gly121, Asp146, 193 to 194, and Glu230 contribute to the S-adenosyl-L-methionine site; that span reads DL.

The protein belongs to the methyltransferase superfamily. LCMT family.

The catalysed reaction is [phosphatase 2A protein]-C-terminal L-leucine + S-adenosyl-L-methionine = [phosphatase 2A protein]-C-terminal L-leucine methyl ester + S-adenosyl-L-homocysteine. Its function is as follows. Methylates the carboxyl group of the C-terminal leucine residue of protein phosphatase 2A catalytic subunits to form alpha-leucine ester residues. The polypeptide is Leucine carboxyl methyltransferase 1 (ppm1) (Emericella nidulans (strain FGSC A4 / ATCC 38163 / CBS 112.46 / NRRL 194 / M139) (Aspergillus nidulans)).